Here is a 785-residue protein sequence, read N- to C-terminus: Endonuclease MutS2 (785 aa).

334–341 (GPNTGGKT) contributes to the ATP binding site. One can recognise a Smr domain in the interval 710 to 785 (LDLRGYNVED…GVGATIAELK (76 aa)).

It belongs to the DNA mismatch repair MutS family. MutS2 subfamily. In terms of assembly, homodimer. Binds to stalled ribosomes, contacting rRNA.

Functionally, endonuclease that is involved in the suppression of homologous recombination and thus may have a key role in the control of bacterial genetic diversity. In terms of biological role, acts as a ribosome collision sensor, splitting the ribosome into its 2 subunits. Detects stalled/collided 70S ribosomes which it binds and splits by an ATP-hydrolysis driven conformational change. Acts upstream of the ribosome quality control system (RQC), a ribosome-associated complex that mediates the extraction of incompletely synthesized nascent chains from stalled ribosomes and their subsequent degradation. Probably generates substrates for RQC. The chain is Endonuclease MutS2 from Brevibacillus brevis (strain 47 / JCM 6285 / NBRC 100599).